We begin with the raw amino-acid sequence, 57 residues long: Small ribosomal subunit protein eS27 (57 aa).

Zn(2+) is bound by residues Cys10, Cys13, Cys29, and Cys32. A C4-type zinc finger spans residues 10-32 (CGDCENEQVVFGKASSVVSCAVC).

Belongs to the eukaryotic ribosomal protein eS27 family. As to quaternary structure, part of the 30S ribosomal subunit. Zn(2+) is required as a cofactor.

The protein is Small ribosomal subunit protein eS27 of Halorubrum lacusprofundi (strain ATCC 49239 / DSM 5036 / JCM 8891 / ACAM 34).